A 143-amino-acid chain; its full sequence is Peptide methionine sulfoxide reductase MsrB (143 aa).

Residues 16 to 139 (DAELRRRLTP…NSAALNFESR (124 aa)) enclose the MsrB domain. Residues Cys-55, Cys-58, Cys-104, and Cys-107 each coordinate Zn(2+). Catalysis depends on Cys-128, which acts as the Nucleophile.

The protein belongs to the MsrB Met sulfoxide reductase family. The cofactor is Zn(2+).

It catalyses the reaction L-methionyl-[protein] + [thioredoxin]-disulfide + H2O = L-methionyl-(R)-S-oxide-[protein] + [thioredoxin]-dithiol. The chain is Peptide methionine sulfoxide reductase MsrB from Burkholderia cenocepacia (strain ATCC BAA-245 / DSM 16553 / LMG 16656 / NCTC 13227 / J2315 / CF5610) (Burkholderia cepacia (strain J2315)).